The chain runs to 360 residues: Peptide chain release factor 1 (360 aa).

N5-methylglutamine is present on Gln-235. A disordered region spans residues Ala-284–Pro-313.

Belongs to the prokaryotic/mitochondrial release factor family. Methylated by PrmC. Methylation increases the termination efficiency of RF1.

The protein localises to the cytoplasm. Peptide chain release factor 1 directs the termination of translation in response to the peptide chain termination codons UAG and UAA. In Salmonella gallinarum (strain 287/91 / NCTC 13346), this protein is Peptide chain release factor 1.